Here is a 189-residue protein sequence, read N- to C-terminus: Protein jagunal homolog (189 aa).

The Cytoplasmic segment spans residues 1–34 (MSSRGVRAAGTDGNDFQNRQRIAQHYQESAQYKS). The helical transmembrane segment at 35 to 55 (VLKWFFVPHFLILVFMWLKVG) threads the bilayer. Residues 56–75 (SEFLRYNFGWKNAFFERLDM) lie on the Lumenal side of the membrane. A helical membrane pass occupies residues 76 to 96 (PAAYPWEYVWCLSFIPIVLAL). Residues 97–105 (SSFQRNKLK) are Cytoplasmic-facing. The chain crosses the membrane as a helical span at residues 106–126 (VLHYAYYAEFICGIFPCMIGL). Residues 127–150 (GGQLPELLEYANDMEGSNTPTFKG) are Lumenal-facing. A helical membrane pass occupies residues 151–171 (IFPMVIIWYIFFAVALQIHGF). Residues 172–189 (SMYFMHHLAAAWAPVKRD) lie on the Cytoplasmic side of the membrane.

The protein belongs to the jagunal family.

It is found in the endoplasmic reticulum membrane. The chain is Protein jagunal homolog from Caenorhabditis briggsae.